A 153-amino-acid chain; its full sequence is Interleukin-4 (153 aa).

The N-terminal stretch at 1–24 is a signal peptide; the sequence is MGLTSQLLPPLFFLLACAGNFVHG. Intrachain disulfides connect C27/C151, C48/C89, and C70/C123. N62 is a glycosylation site (N-linked (GlcNAc...) asparagine).

It belongs to the IL-4/IL-13 family.

The protein resides in the secreted. In terms of biological role, participates in at least several B-cell activation processes as well as of other cell types. It is a costimulator of DNA-synthesis. It induces the expression of class II MHC molecules on resting B-cells. It enhances both secretion and cell surface expression of IgE and IgG1. It also regulates the expression of the low affinity Fc receptor for IgE (CD23) on both lymphocytes and monocytes. Positively regulates IL31RA expression in macrophages. Stimulates autophagy in dendritic cells by interfering with mTORC1 signaling and through the induction of RUFY4. The protein is Interleukin-4 (IL4) of Macaca fascicularis (Crab-eating macaque).